We begin with the raw amino-acid sequence, 481 residues long: MSYIKKLRARLDSGEISAVELTKEYLAKIKEQDKRINSVITLCEAEALKEAEDADAIISAGKQGLLTGIPILHKDLFCTKGIRTTAASKMLDNFVAPYDSTVTKNCKDQGMVTLGKLNMDEFAMGSTNEYSYYGAVSNPWDLERVPGGSSGGSAAAVAAGFAPISTGSDTGGSVRQPASFCGLTAMKPSYGSTSRFGMVAFASSFDQAGVLGHYAEDVAIMLDAIAGECEFDSTCVGVKQNHFTQDLEKDISGKVIGVDESLIKDLPAQIQEAVSKTLDNFKKLGAEIKSVKVPDLKEALSTYYIITPAEAAANLARYDGIRYGYRNPEARDLDELYRKSRTDGFGAEVKRRIMIGNYVLASSQYDSYYNKAQQLRKVMTDQINQIFTQVDAIFMPASPSEAFKKGDKLDPVSAYLSDIYTIPANISGLPAIAFPIGFANNLPVGGQLMAKAFNDNILTQMVVQYQKHYGIEEFILQQARI.

Catalysis depends on charge relay system residues Lys-74 and Ser-149. The active-site Acyl-ester intermediate is the Ser-173.

The protein belongs to the amidase family. GatA subfamily. As to quaternary structure, heterotrimer of A, B and C subunits.

It catalyses the reaction L-glutamyl-tRNA(Gln) + L-glutamine + ATP + H2O = L-glutaminyl-tRNA(Gln) + L-glutamate + ADP + phosphate + H(+). Functionally, allows the formation of correctly charged Gln-tRNA(Gln) through the transamidation of misacylated Glu-tRNA(Gln) in organisms which lack glutaminyl-tRNA synthetase. The reaction takes place in the presence of glutamine and ATP through an activated gamma-phospho-Glu-tRNA(Gln). The sequence is that of Glutamyl-tRNA(Gln) amidotransferase subunit A from Francisella tularensis subsp. tularensis (strain FSC 198).